The following is a 166-amino-acid chain: UPF0254 protein Maeo_0668 (166 aa).

It belongs to the UPF0254 family.

The sequence is that of UPF0254 protein Maeo_0668 from Methanococcus aeolicus (strain ATCC BAA-1280 / DSM 17508 / OCM 812 / Nankai-3).